Consider the following 404-residue polypeptide: uncharacterized protein (404 aa).

Residues cysteine 69, cysteine 75, cysteine 78, and cysteine 166 each contribute to the [4Fe-4S] cluster site. S-adenosyl-L-methionine is bound by residues glutamine 226, tyrosine 253, glutamate 274, and aspartate 334. The active-site Nucleophile is cysteine 361.

This sequence belongs to the class I-like SAM-binding methyltransferase superfamily. RNA M5U methyltransferase family.

This is an uncharacterized protein from Treponema denticola (strain ATCC 35405 / DSM 14222 / CIP 103919 / JCM 8153 / KCTC 15104).